Reading from the N-terminus, the 485-residue chain is UDP-N-acetylmuramate--L-alanine ligase (485 aa).

120–126 (GSHGKTT) lines the ATP pocket.

The protein belongs to the MurCDEF family.

Its subcellular location is the cytoplasm. The catalysed reaction is UDP-N-acetyl-alpha-D-muramate + L-alanine + ATP = UDP-N-acetyl-alpha-D-muramoyl-L-alanine + ADP + phosphate + H(+). The protein operates within cell wall biogenesis; peptidoglycan biosynthesis. Cell wall formation. This Rickettsia massiliae (strain Mtu5) protein is UDP-N-acetylmuramate--L-alanine ligase.